A 554-amino-acid chain; its full sequence is 2-succinyl-5-enolpyruvyl-6-hydroxy-3-cyclohexene-1-carboxylate synthase (554 aa).

Belongs to the TPP enzyme family. MenD subfamily. Homodimer. Mg(2+) serves as cofactor. The cofactor is Mn(2+). Requires thiamine diphosphate as cofactor.

It carries out the reaction isochorismate + 2-oxoglutarate + H(+) = 5-enolpyruvoyl-6-hydroxy-2-succinyl-cyclohex-3-ene-1-carboxylate + CO2. It participates in quinol/quinone metabolism; 1,4-dihydroxy-2-naphthoate biosynthesis; 1,4-dihydroxy-2-naphthoate from chorismate: step 2/7. The protein operates within quinol/quinone metabolism; menaquinone biosynthesis. Catalyzes the thiamine diphosphate-dependent decarboxylation of 2-oxoglutarate and the subsequent addition of the resulting succinic semialdehyde-thiamine pyrophosphate anion to isochorismate to yield 2-succinyl-5-enolpyruvyl-6-hydroxy-3-cyclohexene-1-carboxylate (SEPHCHC). The sequence is that of 2-succinyl-5-enolpyruvyl-6-hydroxy-3-cyclohexene-1-carboxylate synthase from Renibacterium salmoninarum (strain ATCC 33209 / DSM 20767 / JCM 11484 / NBRC 15589 / NCIMB 2235).